A 413-amino-acid polypeptide reads, in one-letter code: Monacolin J acid methylbutanoyltransferase (413 aa).

R73 contributes to the monacolin J binding site. Residue S76 is the Acyl-ester intermediate of the active site. Monacolin J contacts are provided by R173, Y188, and Y258. G366 contributes to the 2-methylbutanoate binding site. Monacolin J is bound by residues E388 and W390.

The protein belongs to the class-A beta-lactamase family. As to quaternary structure, interacts with LovF.

It carries out the reaction monacolin J carboxylate + (S)-2-methylbutanoyl-[2-methylbutanoate polyketide synthase] = lovastatin carboxylate + holo-[2-methylbutanoate polyketide synthase]. The protein operates within polyketide biosynthesis; lovastatin biosynthesis. In terms of biological role, monacolin J acid methylbutanoyltransferase; part of the gene cluster that mediates the biosynthesis of lovastatin (also known as mevinolin, mevacor or monacolin K), a hypolipidemic inhibitor of (3S)-hydroxymethylglutaryl-coenzyme A (HMG-CoA) reductase (HMGR). The first step in the biosynthesis of lovastatin is the production of dihydromonacolin L acid by the lovastatin nonaketide synthase lovB and the trans-acting enoyl reductase lovC via condensation of one acetyl-CoA unit and 8 malonyl-CoA units. Dihydromonacolin L acid is released from lovB by the thioesterase lovG. Next, dihydromonacolin L acid is oxidized by the dihydromonacolin L monooxygenase lovA twice to form monacolin J acid. The 2-methylbutyrate moiety of lovastatin is synthesized by the lovastatin diketide synthase lovF via condensation of one acetyl-CoA unit and one malonyl-CoA unit. Finally, the covalent attachment of this moiety to monacolin J acid is catalyzed by the transesterase lovD to yield lovastatin. LovD has broad substrate specificity and can also convert monacolin J to simvastatin using alpha-dimethylbutanoyl-S-methyl-3-mercaptopropionate (DMB-S-MMP) as the thioester acyl donor, and can also catalyze the reverse reaction and function as hydrolase in vitro. LovD has much higher activity with LovF-bound 2-methylbutanoate than with free diketide substrates. In Aspergillus terreus, this protein is Monacolin J acid methylbutanoyltransferase.